Here is a 502-residue protein sequence, read N- to C-terminus: MPSCAYCCSCGPKMPALQLLFLACLVWGMGARTAQFRKANDRSGRCQYTFTVASPSESSCPREDQAMSAIQDLQRDSSIQHADLESTKARVRSLESLLHQMTSGGVTGTQEVQEGLQGQLGALRRERDQLETQTRDLEVAYNNLLRDKSALEEEKRQLEQENKDLARRLEGSSQEVARLRRGQCPSTHHPSQDMLPGSREVSQWNLDTLAFQELKSELTEVPASQILKNQSGHPRSKEGDKGCGVLMWVGEPVTLRTAETITGKYGVWMRDPKPTHPYTQETTWRIDTVGTGIRQVFEYSQISQFEQGYPSKVHVLPQALESTGAVVYSGSLYFQGAESRTVLRYELNTETVKAEKEIPGAGYHGQFPYAWGGYTDIDLAVDESGLWVIYSTEETRGAIVLSKLNPENLELESTWETNIRKQSVANAFVICGILYTVSSYSSVHATINFAYDTNTGISKTLTIPFKNRYKYSSMVDYNPLERKLFAWDNFNMVTYDIKLSEM.

The first 31 residues, 1–31, serve as a signal peptide directing secretion; sequence MPSCAYCCSCGPKMPALQLLFLACLVWGMGA. The stretch at 82–183 forms a coiled coil; it reads ADLESTKARV…QEVARLRRGQ (102 aa). Residues 166 to 198 are disordered; the sequence is ARRLEGSSQEVARLRRGQCPSTHHPSQDMLPGS. A glycan (N-linked (GlcNAc...) asparagine) is linked at Asn229. The Olfactomedin-like domain occupies 242 to 501; it reads GCGVLMWVGE…MVTYDIKLSE (260 aa). An intrachain disulfide couples Cys243 to Cys431. The Ca(2+) site is built by Asp378, Asn426, Ala427, Val475, and Asp476.

As to quaternary structure, homodimer (via N-terminus). Can also form higher oligomers. Interacts with OLFM3, FN1, NRCAM, GLDN and NFASC. Interacts (via N-terminus) with MYL2. Interacts with SFRP1, FRZB, FZD7, FZD10, FZD1 and WIF1; regulates Wnt signaling. Interacts with SNTA1; regulates muscle hypertrophy. Interacts with ERBB2 and ERBB3; activates ERBB2-ERBB3 signaling pathway. Interacts with SNCG; affects its secretion and its aggregation. In terms of processing, palmitoylated. Undergoes a calcium-dependent proteolytic cleavage at Gln-225 by CAPN2 in the endoplasmic reticulum. The result is the production of two fragments, one of 35 kDa containing the C-terminal olfactomedin-like domain, and another of 20 kDa containing the N-terminal leucine zipper-like domain. Post-translationally, glycosylated. Highly expressed in skeletal muscle and retina. Also detected at lower levels in thyroid gland but not in other endocrine glands such as the adrenal or pituitary glands.

Its subcellular location is the secreted. The protein resides in the golgi apparatus. It localises to the cytoplasmic vesicle. It is found in the extracellular space. The protein localises to the extracellular matrix. Its subcellular location is the extracellular exosome. The protein resides in the mitochondrion. It localises to the mitochondrion intermembrane space. It is found in the mitochondrion inner membrane. The protein localises to the mitochondrion outer membrane. Its subcellular location is the rough endoplasmic reticulum. The protein resides in the cell projection. It localises to the cilium. It is found in the endoplasmic reticulum. Secreted glycoprotein regulating the activation of different signaling pathways in adjacent cells to control different processes including cell adhesion, cell-matrix adhesion, cytoskeleton organization and cell migration. Promotes substrate adhesion, spreading and formation of focal contacts. Negatively regulates cell-matrix adhesion and stress fiber assembly through Rho protein signal transduction. Modulates the organization of actin cytoskeleton by stimulating the formation of stress fibers through interactions with components of Wnt signaling pathways. Promotes cell migration through activation of PTK2 and the downstream phosphatidylinositol 3-kinase signaling. Plays a role in bone formation and promotes osteoblast differentiation in a dose-dependent manner through mitogen-activated protein kinase signaling. Mediates myelination in the peripheral nervous system through ERBB2/ERBB3 signaling. Plays a role as a regulator of muscle hypertrophy through the components of dystrophin-associated protein complex. Involved in positive regulation of mitochondrial depolarization. Plays a role in neurite outgrowth. May participate in the obstruction of fluid outflow in the trabecular meshwork. In Rattus norvegicus (Rat), this protein is Myocilin (Myoc).